Consider the following 516-residue polypeptide: Probable inactive beta-glucosidase 14 (516 aa).

The first 23 residues, 1–23 (MAAAWLVVLLTVHRLLHLSGVSA), serve as a signal peptide directing secretion. Residues glutamine 43, histidine 145, and 190 to 191 (NQ) contribute to the a beta-D-glucoside site. The N-linked (GlcNAc...) asparagine glycan is linked to asparagine 193. Cysteine 210 and cysteine 217 are disulfide-bonded. 2 N-linked (GlcNAc...) asparagine glycosylation sites follow: asparagine 221 and asparagine 270. Tyrosine 334 is an a beta-D-glucoside binding site. A disulfide bond links cysteine 342 and cysteine 347. Residue glutamate 405 participates in a beta-D-glucoside binding. Glutamate 405 acts as the Nucleophile in catalysis. 2 N-linked (GlcNAc...) asparagine glycosylation sites follow: asparagine 415 and asparagine 423. Residues tryptophan 454, 461 to 462 (EW), and phenylalanine 470 each bind a beta-D-glucoside.

It belongs to the glycosyl hydrolase 1 family. As to expression, expressed in flowers and endosperm.

In Oryza sativa subsp. japonica (Rice), this protein is Probable inactive beta-glucosidase 14.